A 480-amino-acid chain; its full sequence is RNA-splicing ligase RtcB homolog (480 aa).

Asp-93, Cys-96, His-202, His-234, and His-328 together coordinate Mn(2+). 201–205 is a GMP binding site; that stretch reads NHYTE. Residues 328–329, 377–380, Ser-384, 403–406, and Lys-479 contribute to the GMP site; these read HN, GGTM, and HGAG. Catalysis depends on His-403, which acts as the GMP-histidine intermediate.

The protein belongs to the RtcB family. As to quaternary structure, catalytic component of the tRNA-splicing ligase complex. It depends on Mn(2+) as a cofactor.

The enzyme catalyses a 3'-end 3'-phospho-ribonucleotide-RNA + a 5'-end dephospho-ribonucleoside-RNA + GTP = a ribonucleotidyl-ribonucleotide-RNA + GMP + diphosphate. It catalyses the reaction a 3'-end 2',3'-cyclophospho-ribonucleotide-RNA + a 5'-end dephospho-ribonucleoside-RNA + GTP + H2O = a ribonucleotidyl-ribonucleotide-RNA + GMP + diphosphate + H(+). In terms of biological role, catalytic subunit of the tRNA-splicing ligase complex that acts by directly joining spliced tRNA halves to mature-sized tRNAs by incorporating the precursor-derived splice junction phosphate into the mature tRNA as a canonical 3',5'-phosphodiester. May act as an RNA ligase with broad substrate specificity, and may function toward other RNAs. The chain is RNA-splicing ligase RtcB homolog from Thalassiosira pseudonana (Marine diatom).